A 104-amino-acid polypeptide reads, in one-letter code: Large ribosomal subunit protein bL21 (104 aa).

Basic residues predominate over residues 78–91; that stretch reads KRRRQNSRRKRGHR. The segment at 78 to 104 is disordered; the sequence is KRRRQNSRRKRGHRQDHTVVRITGISA.

This sequence belongs to the bacterial ribosomal protein bL21 family. In terms of assembly, part of the 50S ribosomal subunit. Contacts protein L20.

Functionally, this protein binds to 23S rRNA in the presence of protein L20. The chain is Large ribosomal subunit protein bL21 from Methylobacterium radiotolerans (strain ATCC 27329 / DSM 1819 / JCM 2831 / NBRC 15690 / NCIMB 10815 / 0-1).